A 911-amino-acid polypeptide reads, in one-letter code: Gem-associated protein 4a (911 aa).

In terms of assembly, component of the core survival motor neuron (SMN) complex composed of Smn, Gem2, Gem3, rig/Gem5 and one of 3 almost identical Gem4 paralogs encoded by Glos/Gem4a, Gem4b or Gem4c. Interacts with Smn; the interaction is probably indirect.

Functionally, component of the survival motor neuron (SMN) complex that catalyzes the assembly of small nuclear ribonucleoproteins (snRNPs), the building blocks of the spliceosome, and thereby plays an important role in the splicing of cellular pre-mRNAs. One of 3 almost identical paralogs (Glos/Gem4a, Gem4b and Gem4c), resulting from a genomic triplication, that have some redundant function. Required for neuromuscular function and organismal viability. This is Gem-associated protein 4a from Drosophila melanogaster (Fruit fly).